The following is a 30-amino-acid chain: Cyclotide hyen-K (30 aa).

A cross-link (cyclopeptide (Gly-Asn)) is located at residues 1 to 30 (GIPCGESCIFIPCITTVVGCSCSNKVCYDN). 3 cysteine pairs are disulfide-bonded: C4/C20, C8/C22, and C13/C27.

This is a cyclic peptide. As to expression, detected in seeds (at protein level).

Its function is as follows. Probably participates in a plant defense mechanism. The sequence is that of Cyclotide hyen-K from Pigea enneasperma (Spade flower).